We begin with the raw amino-acid sequence, 238 residues long: Dolichyldiphosphatase 1 (238 aa).

The next 4 helical transmembrane spans lie at L33 to F53, P100 to L120, F130 to V150, and W162 to F182.

The protein belongs to the dolichyldiphosphatase family.

It is found in the endoplasmic reticulum membrane. It catalyses the reaction a di-trans,poly-cis-dolichyl diphosphate + H2O = a di-trans,poly-cis-dolichyl phosphate + phosphate + H(+). The protein operates within protein modification; protein glycosylation. Required for efficient N-glycosylation. Necessary for maintaining optimal levels of dolichol-linked oligosaccharides. Hydrolyzes dolichyl pyrophosphate at a very high rate and dolichyl monophosphate at a much lower rate. Does not act on phosphatidate. In Rhinolophus ferrumequinum (Greater horseshoe bat), this protein is Dolichyldiphosphatase 1 (DOLPP1).